The sequence spans 432 residues: 3-phosphoshikimate 1-carboxyvinyltransferase (432 aa).

3-phosphoshikimate is bound by residues K23, S24, and R28. Residue K23 participates in phosphoenolpyruvate binding. Residues G95 and R123 each contribute to the phosphoenolpyruvate site. Residues S167, Q169, D317, and K344 each coordinate 3-phosphoshikimate. Q169 contributes to the phosphoenolpyruvate binding site. Catalysis depends on D317, which acts as the Proton acceptor. Phosphoenolpyruvate-binding residues include R348 and R390.

It belongs to the EPSP synthase family. In terms of assembly, monomer.

The protein resides in the cytoplasm. The enzyme catalyses 3-phosphoshikimate + phosphoenolpyruvate = 5-O-(1-carboxyvinyl)-3-phosphoshikimate + phosphate. Its pathway is metabolic intermediate biosynthesis; chorismate biosynthesis; chorismate from D-erythrose 4-phosphate and phosphoenolpyruvate: step 6/7. In terms of biological role, catalyzes the transfer of the enolpyruvyl moiety of phosphoenolpyruvate (PEP) to the 5-hydroxyl of shikimate-3-phosphate (S3P) to produce enolpyruvyl shikimate-3-phosphate and inorganic phosphate. This chain is 3-phosphoshikimate 1-carboxyvinyltransferase, found in Staphylococcus carnosus (strain TM300).